Reading from the N-terminus, the 180-residue chain is MDAQERSERPDPATDPGRGRRLGIDVGSVRIGVASSDPDGILATPVETVPRAKKVPRGTVSPDIARIAEIVREYEAVEVIVGLPRTLRGEKGSAATAAIAFAERLRREIPDVAIRLSDERLTTVSAARALRDSGVRARGQRQVIDQAAAVSILQGWLDERSAVMRSVGEAESATSSGDDA.

Over residues methionine 1 to proline 12 the composition is skewed to basic and acidic residues. Positions methionine 1–glycine 23 are disordered.

This sequence belongs to the YqgF nuclease family.

The protein resides in the cytoplasm. Its function is as follows. Could be a nuclease involved in processing of the 5'-end of pre-16S rRNA. In Nocardia farcinica (strain IFM 10152), this protein is Putative pre-16S rRNA nuclease.